The chain runs to 4043 residues: Polyketide synthase-nonribosomal peptide synthetase (4043 aa).

The Ketosynthase family 3 (KS3) domain maps to 8–446 (SEPIAIIGTG…GANSHAILES (439 aa)). Residues Cys-181, His-320, and His-366 each act as for beta-ketoacyl synthase activity in the active site. The interval 557–877 (VFTGQGAQWA…SRGNSDVEAF (321 aa)) is acyl transferase. Positions 944–1078 (NELLGRQVLD…CRLRITVGDS (135 aa)) are N-terminal hotdog fold. Residues 944 to 1246 (NELLGRQVLD…TQPLSSPTEA (303 aa)) enclose the PKS/mFAS DH domain. Residues 945–1243 (ELLGRQVLDG…GLQTQPLSSP (299 aa)) form a dehydratase (DH) domain region. His-976 functions as the Proton acceptor; for dehydratase activity in the catalytic mechanism. Residues 1093 to 1246 (LLEVESDRFY…TQPLSSPTEA (154 aa)) form a C-terminal hotdog fold region. The active-site Proton donor; for dehydratase activity is Asp-1154. The interval 1400–1585 (RYTKYLAAMA…GIETAIPHHD (186 aa)) is methyltransferase (MT) domain. The ketoreductase (KR)domain stretch occupies residues 2115 to 2288 (TYWLVGLTGG…NASAVHIGAI (174 aa)). Residues 2394 to 2475 (SSSADIYDII…EMVTQAQELL (82 aa)) enclose the Carrier 1 domain. Residues 2395 to 2472 (SSADIYDIIS…TVGEMVTQAQ (78 aa)) form a peptidyl carrier protein region. The residue at position 2435 (Ser-2435) is an O-(pantetheine 4'-phosphoryl)serine. 2 disordered regions span residues 2476–2575 (PKEL…DPSR) and 2587–2630 (EKHL…SQII). Composition is skewed to polar residues over residues 2494–2512 (PKNT…QLQN) and 2520–2534 (ALSQ…NMIK). Residues 2537-2550 (PPKEAEAKQPRPEV) show a composition bias toward basic and acidic residues. Positions 2617–2627 (TSSSSSSTSAS) are enriched in low complexity. The interval 2640–3069 (KSVPMAFGQS…NPALRLNVPP (430 aa)) is condensation. Residues 3102 to 3502 (EIVERYPTHV…EGNLILGGRI (401 aa)) form an adenylation region. In terms of domain architecture, Carrier 2 spans 3617–3697 (TDESPSMAKM…GMVSLIDHSE (81 aa)). The interval 3622–3694 (SMAKMRDVWA…SLTGMVSLID (73 aa)) is thiolation. Position 3657 is an O-(pantetheine 4'-phosphoryl)serine (Ser-3657). The segment at 3735-3954 (LTGATGFLGR…DFVSADRVAM (220 aa)) is reductase-like.

In the C-terminal section; belongs to the NRP synthetase family.

It participates in mycotoxin biosynthesis. In terms of biological role, hybrid PKS-NRPS synthetase; part of the gene cluster that mediates the biosynthesis of the mycotoxins cytochalasins E and K. The hybrid PKS-NRPS synthetase ccsA and the enoyl reductase ccsC are responsible for fusion of phenylalanine with an octaketide backbone and subsequent release of the stable tetramic acid precursor. The polyketide synthase module (PKS) of the PKS-NRPS ccsA is responsible for the synthesis of the octaketide backbone. The downstream nonribosomal peptide synthetase (NRPS) amidates the carboxyl end of the octaketide with a phenylalanine. A reductase-like domain (R) at the C-terminus catalyzes the reductive release of the polyketide-amino acid intermediate. Because ccsA lacks a designated enoylreductase (ER) domain, the required activity is provided the enoyl reductase ccsC. Upon formation of the 11-membered carbocycle-fused perhydroisoindolone intermediate, a number of oxidative steps are required to afford the final cytochalasin E and K, including two hydroxylations at C17 and C18, one alcohol oxidation at C17, one epoxidation at C6 and C7 and two Baeyer-Villiger oxidations. The oxidative modification at C17, C18 and the C6-C7 epoxidation are likely to be catalyzed by the two cytochrome P450 oxygenases ccsD and ccsG. CcsD may be responsible for the epoxidation of the C6-C7 double bond. CcsG may be responsible for the successive oxidative modifications at C17 and C18. The double Baeyer-Villiger oxidations of ketocytochalasin to precytochalasin and cytochalasin Z(16) are among the final steps leading to cytochalasin E and K and are catalyzed by ccsB. The first oxygen insertion step follows that of the classic BVMO mechanism, generating the ester precytochalasin. Release of precytochalasin into an aqueous environment can generate the shunt product iso-precytochalasin through spontaneous isomerization. Alternatively, precytochalasin can undergo further oxidation by ccsB to yield the in-line carbonate-containing cytochalasin Z(16). Cytochalasin Z(16) is a precursor to cytochalasin E and cytochalasin K, whereas iso-precytochalasin is a precursor to cytochalasin Z(17) and rosellichalasin. The hydrolyase ccsE may catalyze hydrolysis of epoxide bond in cytochalasin E to afford cytochalasin K. The function of ccsF has not been assigned but it may play a role in post-PKS-NRPS biosynthetic step, resistance or transport of cytochalasins and related PKS-NRPS products. The protein is Polyketide synthase-nonribosomal peptide synthetase of Aspergillus clavatus (strain ATCC 1007 / CBS 513.65 / DSM 816 / NCTC 3887 / NRRL 1 / QM 1276 / 107).